Reading from the N-terminus, the 479-residue chain is Pyruvate kinase (479 aa).

R36 provides a ligand contact to substrate. K(+) contacts are provided by N38, S40, and D70. Residue 38–41 (NFSH) coordinates ATP. R77 and K160 together coordinate ATP. E225 serves as a coordination point for Mg(2+). Positions 251, 252, and 284 each coordinate substrate. A Mg(2+)-binding site is contributed by D252.

Belongs to the pyruvate kinase family. Homotetramer. Mg(2+) serves as cofactor. The cofactor is K(+).

The catalysed reaction is pyruvate + ATP = phosphoenolpyruvate + ADP + H(+). It participates in carbohydrate degradation; glycolysis; pyruvate from D-glyceraldehyde 3-phosphate: step 5/5. Its activity is regulated as follows. Allosterically activated by AMP and by several sugar phosphates. Belongs to type II PK. The sequence is that of Pyruvate kinase (pykA) from Buchnera aphidicola subsp. Baizongia pistaciae (strain Bp).